We begin with the raw amino-acid sequence, 120 residues long: UPF0102 protein FRAAL5785 (120 aa).

This sequence belongs to the UPF0102 family.

In Frankia alni (strain DSM 45986 / CECT 9034 / ACN14a), this protein is UPF0102 protein FRAAL5785.